Reading from the N-terminus, the 90-residue chain is ATP synthase subunit c (90 aa).

2 consecutive transmembrane segments (helical) span residues 4-24 (FVYSAVAAGFGIAIAAFGCGI) and 53-73 (IGLAMIESLSIYALVVSLILI).

Belongs to the ATPase C chain family. As to quaternary structure, F-type ATPases have 2 components, F(1) - the catalytic core - and F(0) - the membrane proton channel. F(1) has five subunits: alpha(3), beta(3), gamma(1), delta(1), epsilon(1). F(0) has three main subunits: a(1), b(2) and c(10-14). The alpha and beta chains form an alternating ring which encloses part of the gamma chain. F(1) is attached to F(0) by a central stalk formed by the gamma and epsilon chains, while a peripheral stalk is formed by the delta and b chains.

The protein localises to the cell inner membrane. F(1)F(0) ATP synthase produces ATP from ADP in the presence of a proton or sodium gradient. F-type ATPases consist of two structural domains, F(1) containing the extramembraneous catalytic core and F(0) containing the membrane proton channel, linked together by a central stalk and a peripheral stalk. During catalysis, ATP synthesis in the catalytic domain of F(1) is coupled via a rotary mechanism of the central stalk subunits to proton translocation. In terms of biological role, key component of the F(0) channel; it plays a direct role in translocation across the membrane. A homomeric c-ring of between 10-14 subunits forms the central stalk rotor element with the F(1) delta and epsilon subunits. The sequence is that of ATP synthase subunit c from Syntrophobacter fumaroxidans (strain DSM 10017 / MPOB).